The sequence spans 183 residues: Glutathione-regulated potassium-efflux system ancillary protein KefG (183 aa).

This sequence belongs to the NAD(P)H dehydrogenase (quinone) family. KefG subfamily. Interacts with KefB.

The protein localises to the cell inner membrane. It carries out the reaction a quinone + NADH + H(+) = a quinol + NAD(+). The catalysed reaction is a quinone + NADPH + H(+) = a quinol + NADP(+). Functionally, regulatory subunit of a potassium efflux system that confers protection against electrophiles. Required for full activity of KefB. The protein is Glutathione-regulated potassium-efflux system ancillary protein KefG of Enterobacter sp. (strain 638).